A 247-amino-acid chain; its full sequence is Carboxy-S-adenosyl-L-methionine synthase (247 aa).

S-adenosyl-L-methionine-binding positions include Tyr40, 65–67, 90–91, 122–123, Asn137, and Arg204; these read GAS, DN, and DI.

It belongs to the class I-like SAM-binding methyltransferase superfamily. Cx-SAM synthase family. In terms of assembly, homodimer.

It catalyses the reaction prephenate + S-adenosyl-L-methionine = carboxy-S-adenosyl-L-methionine + 3-phenylpyruvate + H2O. In terms of biological role, catalyzes the conversion of S-adenosyl-L-methionine (SAM) to carboxy-S-adenosyl-L-methionine (Cx-SAM). This is Carboxy-S-adenosyl-L-methionine synthase from Pseudomonas putida (strain ATCC 700007 / DSM 6899 / JCM 31910 / BCRC 17059 / LMG 24140 / F1).